Consider the following 144-residue polypeptide: Urease accessory protein UreE (144 aa).

It belongs to the UreE family.

It is found in the cytoplasm. In terms of biological role, involved in urease metallocenter assembly. Binds nickel. Probably functions as a nickel donor during metallocenter assembly. This is Urease accessory protein UreE from Thermosynechococcus vestitus (strain NIES-2133 / IAM M-273 / BP-1).